Here is a 143-residue protein sequence, read N- to C-terminus: Nucleoside diphosphate kinase (143 aa).

Residues Lys-11, Phe-59, Arg-87, Thr-93, Arg-104, and Asn-114 each contribute to the ATP site. His-117 acts as the Pros-phosphohistidine intermediate in catalysis.

Belongs to the NDK family. Homotetramer. Mg(2+) is required as a cofactor.

It localises to the cytoplasm. The enzyme catalyses a 2'-deoxyribonucleoside 5'-diphosphate + ATP = a 2'-deoxyribonucleoside 5'-triphosphate + ADP. The catalysed reaction is a ribonucleoside 5'-diphosphate + ATP = a ribonucleoside 5'-triphosphate + ADP. Functionally, major role in the synthesis of nucleoside triphosphates other than ATP. The ATP gamma phosphate is transferred to the NDP beta phosphate via a ping-pong mechanism, using a phosphorylated active-site intermediate. This Shewanella sp. (strain W3-18-1) protein is Nucleoside diphosphate kinase.